A 568-amino-acid chain; its full sequence is Periplasmic pectate lyase (568 aa).

A signal peptide spans 1 to 19 (MKRFALSLLAGLVALQASA).

It belongs to the polysaccharide lyase 2 family.

The protein localises to the periplasm. It catalyses the reaction Eliminative cleavage of (1-&gt;4)-alpha-D-galacturonan to give oligosaccharides with 4-deoxy-alpha-D-galact-4-enuronosyl groups at their non-reducing ends.. The protein operates within glycan metabolism; pectin degradation; 2-dehydro-3-deoxy-D-gluconate from pectin: step 2/5. This chain is Periplasmic pectate lyase (pelB), found in Pectobacterium carotovorum subsp. carotovorum (Erwinia carotovora subsp. carotovora).